We begin with the raw amino-acid sequence, 130 residues long: Protein ApaG (130 aa).

Residues 3-127 form the ApaG domain; that stretch reads SAMTRSINIL…FSLDSPHAKR (125 aa).

The chain is Protein ApaG from Parvibaculum lavamentivorans (strain DS-1 / DSM 13023 / NCIMB 13966).